The sequence spans 643 residues: Cytoplasmic dynein 1 intermediate chain 1 (643 aa).

Composition is skewed to basic and acidic residues over residues Met-1 to Arg-13 and Gln-20 to Glu-60. Disordered regions lie at residues Met-1 to Ser-65 and Met-96 to Gln-123. Ser-2 carries the post-translational modification N-acetylserine. The segment at Ser-2–Gln-123 is interaction with DCTN1. Ser-50 and Ser-100 each carry phosphoserine. The segment covering Met-96–Ser-107 has biased composition (low complexity). The residue at position 105 (Thr-105) is a Phosphothreonine. A phosphoserine mark is found at Ser-107 and Ser-111. The tract at residues Lys-145 to Val-161 is interaction with DYNLT1. A disordered region spans residues Glu-167–Lys-219. Thr-174 carries the phosphothreonine modification. Phosphoserine is present on residues Ser-177 and Ser-195. The segment covering Val-187–Lys-219 has biased composition (basic and acidic residues). WD repeat units follow at residues Ser-283 to Glu-332, His-336 to Val-376, Ala-385 to Glu-426, Ser-435 to Gly-475, Gly-480 to Ser-525, Asp-528 to Thr-568, and Glu-574 to Asn-613. Residue Ser-633 is modified to Phosphoserine.

The protein belongs to the dynein intermediate chain family. Homodimer. The cytoplasmic dynein 1 complex consists of two catalytic heavy chains (HCs) and a number of non-catalytic subunits presented by intermediate chains (ICs), light intermediate chains (LICs) and light chains (LCs); the composition seems to vary in respect to the IC, LIC and LC composition. The heavy chain homodimer serves as a scaffold for the probable homodimeric assembly of the respective non-catalytic subunits. The ICs and LICs bind directly to the HC dimer and the LCs assemble on the IC dimer. Isoform 1, isoform 2 and isoform 3 interact with DYNC1H1. Isoform 1, isoform 2 and isoform 3 interact with DYNLT3. Isoform 1, isoform 2 and isoform 3 interact with DYNLT1. Interacts with DCTN1. Interacts with MCRS1; the interaction is required for the proper distribution of centriolar satellites. High levels seen in the brain and testis, while a lower level expression is seen in the liver, spleen, kidney, lung, skeletal muscle and heart.

It is found in the cytoplasm. The protein localises to the chromosome. It localises to the centromere. The protein resides in the kinetochore. Its subcellular location is the cytoskeleton. It is found in the spindle pole. Its function is as follows. Acts as one of several non-catalytic accessory components of the cytoplasmic dynein 1 complex that are thought to be involved in linking dynein to cargos and to adapter proteins that regulate dynein function. Cytoplasmic dynein 1 acts as a motor for the intracellular retrograde motility of vesicles and organelles along microtubules. The intermediate chains mediate the binding of dynein to dynactin via its 150 kDa component (p150-glued) DCTN1. May play a role in mediating the interaction of cytoplasmic dynein with membranous organelles and kinetochores. This is Cytoplasmic dynein 1 intermediate chain 1 (Dync1i1) from Rattus norvegicus (Rat).